Reading from the N-terminus, the 322-residue chain is Sideroflexin-1 (322 aa).

Serine 2 is modified (N-acetylserine). At 2–102 (SGELPPNINI…MSAQVPMNMT (101 aa)) the chain is on the mitochondrial matrix side. Residues 103–120 (ITGCMMTFYRTTPAVLFW) traverse the membrane as a helical segment. At 121–146 (QWINQSFNAVVNYTNRSGDAPLTVNE) the chain is on the mitochondrial intermembrane side. The chain crosses the membrane as a helical span at residues 147 to 167 (LGTAYVSATTGAVATALGLNA). The Mitochondrial matrix segment spans residues 168 to 174 (LTKHVSP). The chain crosses the membrane as a helical span at residues 175–195 (LIGRFVPFAAVAAANCINIPL). Residues 196–228 (MRQRELRAGIPVTDENGNRLGESANAAKQAITQ) lie on the Mitochondrial intermembrane side of the membrane. The helical transmembrane segment at 229 to 249 (VVISRILMAAPGMAIPPFIMN) threads the bilayer. Over 250 to 266 (TLEKKAFLKRFPWMSAP) the chain is Mitochondrial matrix. A helical transmembrane segment spans residues 267–287 (IQVGLVGFCLVFATPLCCALF). Over 288–322 (PQKSSMSVTSLEAELQAKIRETSPELRRVYFNKGL) the chain is Mitochondrial intermembrane.

Belongs to the sideroflexin family.

Its subcellular location is the mitochondrion inner membrane. It carries out the reaction L-serine(in) = L-serine(out). The enzyme catalyses L-alanine(in) = L-alanine(out). It catalyses the reaction L-cysteine(in) = L-cysteine(out). Its function is as follows. Amino acid transporter importing serine, an essential substrate of the mitochondrial branch of the one-carbon pathway, into mitochondria. Mitochondrial serine is then converted to glycine and formate, which exits to the cytosol where it is used to generate the charged folates that serve as one-carbon donors. May also transport other amino acids including alanine and cysteine. This Sus scrofa (Pig) protein is Sideroflexin-1 (SFXN1).